The primary structure comprises 64 residues: Large ribosomal subunit protein bL33 (64 aa).

The protein belongs to the bacterial ribosomal protein bL33 family.

The chain is Large ribosomal subunit protein bL33 from Microcystis aeruginosa (strain NIES-843 / IAM M-2473).